We begin with the raw amino-acid sequence, 197 residues long: UPF0637 protein LEUM_0496 (197 aa).

The protein belongs to the UPF0637 family.

This chain is UPF0637 protein LEUM_0496, found in Leuconostoc mesenteroides subsp. mesenteroides (strain ATCC 8293 / DSM 20343 / BCRC 11652 / CCM 1803 / JCM 6124 / NCDO 523 / NBRC 100496 / NCIMB 8023 / NCTC 12954 / NRRL B-1118 / 37Y).